Consider the following 212-residue polypeptide: Uridine kinase (212 aa).

13 to 20 serves as a coordination point for ATP; sequence GGSGSGKT.

Belongs to the uridine kinase family.

The protein localises to the cytoplasm. The enzyme catalyses uridine + ATP = UMP + ADP + H(+). It carries out the reaction cytidine + ATP = CMP + ADP + H(+). It functions in the pathway pyrimidine metabolism; CTP biosynthesis via salvage pathway; CTP from cytidine: step 1/3. The protein operates within pyrimidine metabolism; UMP biosynthesis via salvage pathway; UMP from uridine: step 1/1. The polypeptide is Uridine kinase (Bacillus cereus (strain B4264)).